The following is a 901-amino-acid chain: HTH-type transcriptional regulator MalT (901 aa).

39 to 46 contributes to the ATP binding site; that stretch reads SPAGYGKT. Residues 829 to 894 form the HTH luxR-type domain; sequence ELIRTSPLTQ…AAVQHAQKLL (66 aa). Residues 853 to 872 constitute a DNA-binding region (H-T-H motif); the sequence is NEQIAGELEVAATTIKTHIR.

It belongs to the MalT family. As to quaternary structure, monomer in solution. Oligomerizes to an active state in the presence of the positive effectors ATP and maltotriose.

With respect to regulation, activated by ATP and maltotriose, which are both required for DNA binding. Functionally, positively regulates the transcription of the maltose regulon whose gene products are responsible for uptake and catabolism of malto-oligosaccharides. Specifically binds to the promoter region of its target genes, recognizing a short DNA motif called the MalT box. In Escherichia coli (strain 55989 / EAEC), this protein is HTH-type transcriptional regulator MalT.